Reading from the N-terminus, the 447-residue chain is Polyamine export protein (447 aa).

At 1-4 the chain is on the cytoplasmic side; that stretch reads MLNS. The 197-residue stretch at 1-197 folds into the CNNM transmembrane domain; the sequence is MLNSIFIIFC…ALAGVLRKQE (197 aa). Residues 5-25 form a helical membrane-spanning segment; the sequence is IFIIFCLIAVSAFFSISEISL. The Periplasmic portion of the chain corresponds to 26–54; sequence AASRKIKLKLLADEGSINAQRVLKMQENP. A helical membrane pass occupies residues 55-75; sequence GMFFTVVQIGLNAVAILGGIV. Topologically, residues 76–99 are cytoplasmic; sequence GDAAFSPAFSALFSHYMSPELSEQ. Residues 100–120 traverse the membrane as a helical segment; it reads LSFILSFSLVTGLFILFADLT. Topologically, residues 121–141 are periplasmic; that stretch reads PKRIGMIAPEAVALRIINPMR. A helical membrane pass occupies residues 142–162; the sequence is FCLFVFRPLVWLFNGMANNIF. Residues 163 to 447 are Cytoplasmic-facing; the sequence is RLFKIPMVRK…DAQGKEDSAA (285 aa). CBS domains follow at residues 216–275 and 282–343; these read MTSR…NQSM and QIRN…GLEE.

It belongs to the UPF0053 family. PaeA subfamily.

It localises to the cell inner membrane. Involved in cadaverine and putrescine tolerance in stationary phase. May facilitate the efflux of both cadaverine and putrescine from the cytoplasm, reducing potentially toxic levels under certain stress conditions. In Salmonella typhimurium (strain 14028s / SGSC 2262), this protein is Polyamine export protein.